We begin with the raw amino-acid sequence, 802 residues long: MLVSYNWVKEFFQDFPLTAEELGEAITRTGIEIEGVEELSASLKNVVVGEVLSCERHPDAEKLNKCLVQTDEEEPVQIICGAPNVAAGQKVIVAKVGARLPGGLKIKRAKLRGEVSEGMICSLAELGFESKVVPKAYADGIYVLPEHVETGVSAITLLGLDDAILDMAITPNRADALSMNGVAHEVGAIIHQKPAQPTEPDVSEKGKADDFISVEVENPTETPYYAIKMVENIEIKESPLWLQTKLMKAGIRPHNNVVDVTNYINLLYGQPLHSFDYDKIGSKKIVVRSAKDQEEITTLDGEKRILQTGHTVITNGTEPIAIAGVMGGEFSEVTETTTTVALEGAIFSSSSVGKASRELYLRTEASIRYDKGSDAWKVEKALAHGGALIAELSGGTLVGGVVEVDNREKAVNKIETSLTRINRILGTEISLSEIETIFDRLGFVLEVKEDTLIIEVPTRRWDITIEADILEEVARIYGYDEIPVTLPATSTTGGLSDSQKARRVMRAYLEGAGLNQALTYSLTSKKDATRLALSDEKTVALSMPMSEEHSHLRTSIVPQLIRSASYNIARKNMDVALYEMGTVFYATEGDNLPIEQEHLAGLITGNWHTADWQKTPKPVDFFVLKGIVEGLVNKLGIEAELHWKQIEKEELHPGRTASIQLEGKEIGYLGALHPAVEASYDLKETYVFEINVKALLDATKEKVVYHPIPRYPEMTRDLALLVDKDTDHATISQVIKEHGGNLLVDIELFDIFEGESLGENKKSLAYTLTFLDSERTLVEEDVQKATNKVVEALQAKLHAIIR.

In terms of domain architecture, tRNA-binding spans 40-155 (SASLKNVVVG…EHVETGVSAI (116 aa)). In terms of domain architecture, B5 spans 409-484 (KAVNKIETSL…RIYGYDEIPV (76 aa)). Positions 462, 468, 471, and 472 each coordinate Mg(2+). Residues 709–802 (PRYPEMTRDL…LQAKLHAIIR (94 aa)) enclose the FDX-ACB domain.

This sequence belongs to the phenylalanyl-tRNA synthetase beta subunit family. Type 1 subfamily. As to quaternary structure, tetramer of two alpha and two beta subunits. Mg(2+) is required as a cofactor.

The protein localises to the cytoplasm. The catalysed reaction is tRNA(Phe) + L-phenylalanine + ATP = L-phenylalanyl-tRNA(Phe) + AMP + diphosphate + H(+). The protein is Phenylalanine--tRNA ligase beta subunit of Listeria innocua serovar 6a (strain ATCC BAA-680 / CLIP 11262).